Here is a 367-residue protein sequence, read N- to C-terminus: D-alanine--D-alanine ligase (367 aa).

In terms of domain architecture, ATP-grasp spans 145–351 (KRLLRDAGLP…QPALMDELVA (207 aa)). Residue 174–229 (RAVGSSELFVKPANLGSSVGISKTRDAAEFEAACQLALRFDRKILIERCIAPVREI) coordinates ATP. 3 residues coordinate Mg(2+): Asp-306, Glu-318, and Asn-320.

This sequence belongs to the D-alanine--D-alanine ligase family. Mg(2+) serves as cofactor. The cofactor is Mn(2+).

The protein resides in the cytoplasm. It catalyses the reaction 2 D-alanine + ATP = D-alanyl-D-alanine + ADP + phosphate + H(+). It functions in the pathway cell wall biogenesis; peptidoglycan biosynthesis. Functionally, cell wall formation. In Bradyrhizobium sp. (strain ORS 278), this protein is D-alanine--D-alanine ligase.